Reading from the N-terminus, the 166-residue chain is Large ribosomal subunit protein uL10 (166 aa).

The protein belongs to the universal ribosomal protein uL10 family. In terms of assembly, part of the ribosomal stalk of the 50S ribosomal subunit. The N-terminus interacts with L11 and the large rRNA to form the base of the stalk. The C-terminus forms an elongated spine to which L12 dimers bind in a sequential fashion forming a multimeric L10(L12)X complex.

Functionally, forms part of the ribosomal stalk, playing a central role in the interaction of the ribosome with GTP-bound translation factors. This is Large ribosomal subunit protein uL10 from Neisseria gonorrhoeae (strain ATCC 700825 / FA 1090).